The sequence spans 329 residues: Phenylalanine--tRNA ligase alpha subunit (329 aa).

E254 contributes to the Mg(2+) binding site.

This sequence belongs to the class-II aminoacyl-tRNA synthetase family. Phe-tRNA synthetase alpha subunit type 1 subfamily. Tetramer of two alpha and two beta subunits. Mg(2+) serves as cofactor.

The protein localises to the cytoplasm. It carries out the reaction tRNA(Phe) + L-phenylalanine + ATP = L-phenylalanyl-tRNA(Phe) + AMP + diphosphate + H(+). This Mannheimia succiniciproducens (strain KCTC 0769BP / MBEL55E) protein is Phenylalanine--tRNA ligase alpha subunit.